We begin with the raw amino-acid sequence, 263 residues long: 5'-nucleotidase SurE (263 aa).

4 residues coordinate a divalent metal cation: Asp21, Asp22, Ser52, and Asn105.

The protein belongs to the SurE nucleotidase family. Requires a divalent metal cation as cofactor.

It localises to the cytoplasm. It carries out the reaction a ribonucleoside 5'-phosphate + H2O = a ribonucleoside + phosphate. Its function is as follows. Nucleotidase that shows phosphatase activity on nucleoside 5'-monophosphates. The protein is 5'-nucleotidase SurE of Vibrio cholerae serotype O1 (strain ATCC 39541 / Classical Ogawa 395 / O395).